The primary structure comprises 39 residues: Cytochrome b559 subunit beta (39 aa).

Residues 14 to 30 (WLAVHGLAVPTVFFLGS) traverse the membrane as a helical segment. H18 lines the heme pocket.

This sequence belongs to the PsbE/PsbF family. As to quaternary structure, heterodimer of an alpha subunit and a beta subunit. PSII is composed of 1 copy each of membrane proteins PsbA, PsbB, PsbC, PsbD, PsbE, PsbF, PsbH, PsbI, PsbJ, PsbK, PsbL, PsbM, PsbT, PsbX, PsbY, PsbZ, Psb30/Ycf12, at least 3 peripheral proteins of the oxygen-evolving complex and a large number of cofactors. It forms dimeric complexes. Requires heme b as cofactor.

It localises to the plastid. Its subcellular location is the chloroplast thylakoid membrane. In terms of biological role, this b-type cytochrome is tightly associated with the reaction center of photosystem II (PSII). PSII is a light-driven water:plastoquinone oxidoreductase that uses light energy to abstract electrons from H(2)O, generating O(2) and a proton gradient subsequently used for ATP formation. It consists of a core antenna complex that captures photons, and an electron transfer chain that converts photonic excitation into a charge separation. The chain is Cytochrome b559 subunit beta from Pinus koraiensis (Korean pine).